Consider the following 291-residue polypeptide: ATP phosphoribosyltransferase (291 aa).

This sequence belongs to the ATP phosphoribosyltransferase family. Long subfamily. The cofactor is Mg(2+).

The protein localises to the cytoplasm. The catalysed reaction is 1-(5-phospho-beta-D-ribosyl)-ATP + diphosphate = 5-phospho-alpha-D-ribose 1-diphosphate + ATP. Its pathway is amino-acid biosynthesis; L-histidine biosynthesis; L-histidine from 5-phospho-alpha-D-ribose 1-diphosphate: step 1/9. Its activity is regulated as follows. Feedback inhibited by histidine. Catalyzes the condensation of ATP and 5-phosphoribose 1-diphosphate to form N'-(5'-phosphoribosyl)-ATP (PR-ATP). Has a crucial role in the pathway because the rate of histidine biosynthesis seems to be controlled primarily by regulation of HisG enzymatic activity. The chain is ATP phosphoribosyltransferase from Geotalea daltonii (strain DSM 22248 / JCM 15807 / FRC-32) (Geobacter daltonii).